Consider the following 906-residue polypeptide: Toll-like receptor 12 (906 aa).

The signal sequence occupies residues 1–21 (MGRYWLLPGLLLSLPLVTGWS). The Extracellular segment spans residues 22–709 (TSNCLVTEGS…DHCPQTLELK (688 aa)). Asn-59 carries an N-linked (GlcNAc...) asparagine glycan. LRR repeat units follow at residues 91–114 (FPGL…LRGL), 115–140 (GQLQ…AFSD), 142–170 (ISLQ…QWLG), 198–222 (SWTL…SLQG), 224–247 (QVEI…GLQK), 267–290 (HFEL…ALAS), 291–314 (CHSL…FLTA), 316–338 (PRLQ…MNET), 341–364 (VSGL…AFSC), 366–388 (PHLR…LFQE), 389–412 (LQQL…WLAA), 414–436 (PALT…GFWG), 462–484 (LTSL…PAIF), 485–508 (PSLE…NASG), and 510–533 (FPAL…GTSN). Asn-336 carries N-linked (GlcNAc...) asparagine glycosylation. Asn-505 carries N-linked (GlcNAc...) asparagine glycosylation. Asn-552 is a glycosylation site (N-linked (GlcNAc...) asparagine). LRR repeat units follow at residues 562-586 (LPSL…QLEE) and 591-614 (LPQL…AFQR). The helical transmembrane segment at 710-730 (LFLASSALVFMLIALPLLQEA) threads the bilayer. Residues 731–906 (RNSWIPYLQA…FWTWLRSRLG (176 aa)) are Cytoplasmic-facing. Residues 759–905 (FLFDVFVSHC…GFWTWLRSRL (147 aa)) form the TIR domain.

Belongs to the Toll-like receptor family. Binds MYD88 via their respective TIR domains. In terms of tissue distribution, macrophages, liver, kidney and bladder epithelial cells.

It is found in the membrane. In terms of biological role, participates in the innate immune response to microbial agents. Acts via MYD88 and TRAF6, leading to NF-kappa-B activation, cytokine secretion and the inflammatory response. Plays a role in preventing infection of internal organs of the urogenital system. The polypeptide is Toll-like receptor 12 (Mus musculus (Mouse)).